The sequence spans 571 residues: Protein tesmin/TSO1-like CXC 6 (571 aa).

Disordered stretches follow at residues 1 to 52, 92 to 119, 293 to 325, 370 to 411, and 507 to 571; these read MGEG…AAAS, IRHP…QKKK, NQGT…GGNA, LANQ…RSLS, and NGVS…KKDL. Residues 7 to 16 show a composition bias toward basic and acidic residues; it reads GDKFPPKTDE. The CRC domain occupies 117 to 241; that stretch reads KKKQCNCKHS…KCLDCKNFEG (125 aa). Composition is skewed to polar residues over residues 293 to 319, 373 to 388, and 508 to 539; these read NQGT…QTGS, QKET…QGHV, and GVSQ…QTAK. A compositionally biased stretch (low complexity) spans 540–557; that stretch reads QPSQLTTTTTTPNTSSQT.

The protein belongs to the lin-54 family. In terms of tissue distribution, ubiquitous but expressed mostly in flowers.

The protein resides in the nucleus. Plays a role in development of both male and female reproductive tissues. This is Protein tesmin/TSO1-like CXC 6 (TCX6) from Arabidopsis thaliana (Mouse-ear cress).